We begin with the raw amino-acid sequence, 646 residues long: Cytochrome b translation regulator cbp8 (646 aa).

As to quaternary structure, component of a complex, at least composed of cbp7 and cbp8.

It is found in the mitochondrion. In terms of biological role, translation factor for cob1/cytochrome b; plays a role in cob1 mRNA stabilization and required for correct folding of the protein. This Schizosaccharomyces pombe (strain 972 / ATCC 24843) (Fission yeast) protein is Cytochrome b translation regulator cbp8.